The sequence spans 220 residues: MKSVFVCTLVLALAHHAFAGVCDSNVDYNSTLITPCLGNDIIVLWPNYLNFNTYYKCVEFGKPQLMDCPPNTYFTYYFQQCTGCDNFIPAPTCEYLKQTTDVECVPLVKPTTAAPTTLKTTPSKTTPIVTTAPPSTPVPSTIVTNKPDPTTPKTTKPPKVTTTVNPSPPTGTGPATNAPSSDIPLPPIASTVNTKYPTPPGMPPTPPSFGTPPSIVQLQN.

An N-terminal signal peptide occupies residues 1–19; it reads MKSVFVCTLVLALAHHAFA. The N-linked (GlcNAc...) asparagine glycan is linked to N29. A Chitin-binding type-2 domain is found at 33 to 95; that stretch reads ITPCLGNDII…NFIPAPTCEY (63 aa). A disulfide bridge connects residues C68 and C84. The span at 116 to 165 shows a compositional bias: low complexity; it reads TTLKTTPSKTTPIVTTAPPSTPVPSTIVTNKPDPTTPKTTKPPKVTTTVN. The interval 116 to 220 is disordered; that stretch reads TTLKTTPSKT…TPPSIVQLQN (105 aa). Residues 197–210 are compositionally biased toward pro residues; that stretch reads PTPPGMPPTPPSFG.

Glycosylated. Larval peritrophic membrane.

May bind oligosaccharide structures. The chain is Peritrophin-55 from Lucilia cuprina (Green bottle fly).